Here is a 284-residue protein sequence, read N- to C-terminus: Bifunctional protein FolD 2 (284 aa).

NADP(+)-binding positions include 166–168 (GAS) and Ile232.

This sequence belongs to the tetrahydrofolate dehydrogenase/cyclohydrolase family. In terms of assembly, homodimer.

It catalyses the reaction (6R)-5,10-methylene-5,6,7,8-tetrahydrofolate + NADP(+) = (6R)-5,10-methenyltetrahydrofolate + NADPH. It carries out the reaction (6R)-5,10-methenyltetrahydrofolate + H2O = (6R)-10-formyltetrahydrofolate + H(+). It functions in the pathway one-carbon metabolism; tetrahydrofolate interconversion. Catalyzes the oxidation of 5,10-methylenetetrahydrofolate to 5,10-methenyltetrahydrofolate and then the hydrolysis of 5,10-methenyltetrahydrofolate to 10-formyltetrahydrofolate. This is Bifunctional protein FolD 2 from Colwellia psychrerythraea (strain 34H / ATCC BAA-681) (Vibrio psychroerythus).